The following is a 228-amino-acid chain: Clathrin light chain B (228 aa).

Methionine 1 carries the post-translational modification Blocked amino end (Met). Positions 1–17 (MADDFGFFSSSESGAPE) are enriched in low complexity. A disordered region spans residues 1-80 (MADDFGFFSS…VNGDVFQEAN (80 aa)). Serine 11 and serine 13 each carry phosphoserine. Residues 92–154 (ADRLTQEPES…QVEKNKINNR (63 aa)) are involved in binding clathrin heavy chain. Threonine 186 is modified (phosphothreonine). The cysteines at positions 198 and 208 are disulfide-linked. The residue at position 203 (lysine 203) is an N6-acetyllysine. A Phosphoserine modification is found at serine 216.

Belongs to the clathrin light chain family. In terms of assembly, clathrin coats are formed from molecules containing 3 heavy chains and 3 light chains. Interacts (via N-terminus) with HIP1. Interacts with HIP1R.

The protein localises to the cytoplasmic vesicle membrane. The protein resides in the membrane. It is found in the coated pit. Clathrin is the major protein of the polyhedral coat of coated pits and vesicles. In Bos taurus (Bovine), this protein is Clathrin light chain B (CLTB).